Reading from the N-terminus, the 245-residue chain is tRNA pseudouridine synthase A (245 aa).

Aspartate 52 (nucleophile) is an active-site residue. Residue tyrosine 111 coordinates substrate.

This sequence belongs to the tRNA pseudouridine synthase TruA family. In terms of assembly, homodimer.

It carries out the reaction uridine(38/39/40) in tRNA = pseudouridine(38/39/40) in tRNA. In terms of biological role, formation of pseudouridine at positions 38, 39 and 40 in the anticodon stem and loop of transfer RNAs. The chain is tRNA pseudouridine synthase A from Wolbachia pipientis subsp. Culex pipiens (strain wPip).